A 156-amino-acid polypeptide reads, in one-letter code: UPF0225 protein PFLU_1319 (156 aa).

The protein belongs to the UPF0225 family.

In Pseudomonas fluorescens (strain SBW25), this protein is UPF0225 protein PFLU_1319.